The sequence spans 307 residues: Voltage-dependent anion channel-forming protein sll1024 (307 aa).

The next 4 helical transmembrane spans lie at 26–46 (VIPAIASRVLVCMAFSLGVTL), 54–74 (FSIPIQESIVPSIVLGLLLVF), 226–246 (LIFLYCFITPFQIVNTLHWAT), and 247–267 (AFVVGIIAFTVFGIEEIGVEI).

This sequence belongs to the anion channel-forming bestrophin (TC 1.A.46) family.

The protein resides in the cell membrane. This chain is Voltage-dependent anion channel-forming protein sll1024, found in Synechocystis sp. (strain ATCC 27184 / PCC 6803 / Kazusa).